The primary structure comprises 590 residues: Phosphatidylserine decarboxylase proenzyme 1, mitochondrial (590 aa).

A mitochondrion-targeting transit peptide spans 1-59 (MPLKPISFRWSKTSVRSVPNPFMYGPDNLNKPLSRASQMAERVHQQTPSSTNYQQRRYF). Residues 60-140 (SYYYYQFPKI…GKERRRFIRW (81 aa)) are Mitochondrial matrix-facing. Residues 141–159 (WTVTSLTIVLGGVYAKIKY) form a helical membrane-spanning segment. The Mitochondrial intermembrane segment spans residues 160 to 590 (ERGDHEENPY…KVGQSLGGFV (431 aa)). Active-site charge relay system; for autoendoproteolytic cleavage activity residues include D260, H403, and S558. S558 acts as the Schiff-base intermediate with substrate; via pyruvic acid; for decarboxylase activity in catalysis. S558 bears the Pyruvic acid (Ser); by autocatalysis mark.

This sequence belongs to the phosphatidylserine decarboxylase family. PSD-B subfamily. Eukaryotic type I sub-subfamily. As to quaternary structure, heterodimer of a large membrane-associated beta subunit and a small pyruvoyl-containing alpha subunit. The cofactor is pyruvate. In terms of processing, is synthesized initially as an inactive proenzyme. Formation of the active enzyme involves a self-maturation process in which the active site pyruvoyl group is generated from an internal serine residue via an autocatalytic post-translational modification. Two non-identical subunits are generated from the proenzyme in this reaction, and the pyruvate is formed at the N-terminus of the alpha chain, which is derived from the carboxyl end of the proenzyme. The autoendoproteolytic cleavage occurs by a canonical serine protease mechanism, in which the side chain hydroxyl group of the serine supplies its oxygen atom to form the C-terminus of the beta chain, while the remainder of the serine residue undergoes an oxidative deamination to produce ammonia and the pyruvoyl prosthetic group on the alpha chain. During this reaction, the Ser that is part of the protease active site of the proenzyme becomes the pyruvoyl prosthetic group, which constitutes an essential element of the active site of the mature decarboxylase.

The protein localises to the mitochondrion inner membrane. The enzyme catalyses a 1,2-diacyl-sn-glycero-3-phospho-L-serine + H(+) = a 1,2-diacyl-sn-glycero-3-phosphoethanolamine + CO2. Its pathway is phospholipid metabolism; phosphatidylethanolamine biosynthesis; phosphatidylethanolamine from CDP-diacylglycerol: step 2/2. In terms of biological role, catalyzes the formation of phosphatidylethanolamine (PtdEtn) from phosphatidylserine (PtdSer). Plays a central role in phospholipid metabolism and in the interorganelle trafficking of phosphatidylserine. Important for virulence. In Candida albicans (strain SC5314 / ATCC MYA-2876) (Yeast), this protein is Phosphatidylserine decarboxylase proenzyme 1, mitochondrial.